Consider the following 631-residue polypeptide: Peptidyl-prolyl cis-trans isomerase CYP71 (631 aa).

The disordered stretch occupies residues 26–45 (VEEEEPMVGPGPAPRGKRKR). WD repeat units lie at residues 68-106 (MHRD…IEFA), 111-150 (SHLG…MMAM), 201-240 (IHMN…FPED), and 257-297 (KCKT…RRVY). One can recognise a PPIase cyclophilin-type domain in the interval 474–628 (LPENVIMHTT…QDVKILNVTV (155 aa)).

This sequence belongs to the cyclophilin-type PPIase family. Interacts with FAS1 and LHP1. Interacts (via WD repeat domain) with histone H3. In terms of tissue distribution, ubiquitous. Expressed in the meristems.

It is found in the nucleus. The catalysed reaction is [protein]-peptidylproline (omega=180) = [protein]-peptidylproline (omega=0). Its function is as follows. PPIases accelerate the folding of proteins. It catalyzes the cis-trans isomerization of proline imidic peptide bonds in oligopeptides. Histone proline isomerase that increases the rate of cis-trans isomerization of the synthetic histone H3 peptides H3P30 (RKSAP30F-p-nitroanilide) and H3P30K27me3 (RKme3-SAP30F-p-nitroanilide) in the histone H3 N-terminal tail, in vitro. Histone remodeling factor involved in chromatin-based gene silencing. Reinforces H3K27 methylation. Involved in fundamental processes of chromatin assembly and histone modification by mediating the targeting of FAS1 and LHP1 on the chromatin. Required for the formation and development of leaves, for normal phyllotaxy and for the formation, maintenance and activity of root and shoot apical meristems. The protein is Peptidyl-prolyl cis-trans isomerase CYP71 of Arabidopsis thaliana (Mouse-ear cress).